The primary structure comprises 390 residues: 1-deoxy-D-xylulose 5-phosphate reductoisomerase (390 aa).

Positions 10, 11, 12, 13, and 124 each coordinate NADPH. K125 lines the 1-deoxy-D-xylulose 5-phosphate pocket. NADPH is bound at residue E126. D150 provides a ligand contact to Mn(2+). S151, E152, S181, and H204 together coordinate 1-deoxy-D-xylulose 5-phosphate. A Mn(2+)-binding site is contributed by E152. NADPH is bound at residue G210. Residues S217, N222, K223, and E226 each contribute to the 1-deoxy-D-xylulose 5-phosphate site. E226 provides a ligand contact to Mn(2+).

Belongs to the DXR family. Mg(2+) serves as cofactor. Requires Mn(2+) as cofactor.

It catalyses the reaction 2-C-methyl-D-erythritol 4-phosphate + NADP(+) = 1-deoxy-D-xylulose 5-phosphate + NADPH + H(+). Its pathway is isoprenoid biosynthesis; isopentenyl diphosphate biosynthesis via DXP pathway; isopentenyl diphosphate from 1-deoxy-D-xylulose 5-phosphate: step 1/6. Its function is as follows. Catalyzes the NADPH-dependent rearrangement and reduction of 1-deoxy-D-xylulose-5-phosphate (DXP) to 2-C-methyl-D-erythritol 4-phosphate (MEP). This is 1-deoxy-D-xylulose 5-phosphate reductoisomerase from Janthinobacterium sp. (strain Marseille) (Minibacterium massiliensis).